Reading from the N-terminus, the 136-residue chain is HTH-type transcriptional regulator CysB (136 aa).

Positions 1–59 (MDVRQLRSLVTLVEVRFSVSRAAECLHLVQSAVTQHLKQLEAELGTRLFVRHGKRLVGL) constitute an HTH lysR-type domain. Positions 19-38 (VSRAAECLHLVQSAVTQHLK) form a DNA-binding region, H-T-H motif.

This sequence belongs to the LysR transcriptional regulatory family.

This protein is a positive regulator of gene expression for the cysteine regulon. In Thiocapsa roseopersicina, this protein is HTH-type transcriptional regulator CysB (cysB).